A 215-amino-acid polypeptide reads, in one-letter code: Adenylate kinase (215 aa).

10 to 15 (GTGKGT) is a binding site for ATP. The NMP stretch occupies residues 30–59 (STGHILRKISTKKTLFGEKIKNIINSGKLV). Residues Thr31, Arg36, 57–59 (KLV), 85–88 (GFPR), and Gln92 contribute to the AMP site. The tract at residues 122-157 (TRTINPITGTIYNNVIQKNSELKNLKINTLKSRLDD) is LID. ATP-binding positions include Arg123 and 132 to 133 (IY). AMP is bound by residues Arg154 and Arg165. Residue Asn198 participates in ATP binding.

It belongs to the adenylate kinase family. In terms of assembly, monomer.

The protein localises to the cytoplasm. It carries out the reaction AMP + ATP = 2 ADP. Its pathway is purine metabolism; AMP biosynthesis via salvage pathway; AMP from ADP: step 1/1. In terms of biological role, catalyzes the reversible transfer of the terminal phosphate group between ATP and AMP. Plays an important role in cellular energy homeostasis and in adenine nucleotide metabolism. This Buchnera aphidicola subsp. Baizongia pistaciae (strain Bp) protein is Adenylate kinase.